Consider the following 121-residue polypeptide: Large ribosomal subunit protein bL12 (121 aa).

The protein belongs to the bacterial ribosomal protein bL12 family. As to quaternary structure, homodimer. Part of the ribosomal stalk of the 50S ribosomal subunit. Forms a multimeric L10(L12)X complex, where L10 forms an elongated spine to which 2 to 4 L12 dimers bind in a sequential fashion. Binds GTP-bound translation factors.

Functionally, forms part of the ribosomal stalk which helps the ribosome interact with GTP-bound translation factors. Is thus essential for accurate translation. This Leuconostoc citreum (strain KM20) protein is Large ribosomal subunit protein bL12.